A 443-amino-acid chain; its full sequence is L-ornithine N(5)-monooxygenase (443 aa).

FAD-binding positions include 45 to 53 (DKQGDYRWH) and Gln64. Residue Lys69 participates in substrate binding. Val130 contacts FAD. NADP(+) is bound by residues 215-218 (GGQS) and Arg240. Residues 254 to 257 (NEVF) and Asn284 each bind substrate. Residue 284-286 (NYS) coordinates NADP(+). 407-409 (TLL) contacts FAD. Ser410 lines the substrate pocket.

Belongs to the lysine N(6)-hydroxylase/L-ornithine N(5)-oxygenase family. Homotetramer. FAD serves as cofactor.

It is found in the cell inner membrane. It carries out the reaction L-ornithine + NADPH + O2 = N(5)-hydroxy-L-ornithine + NADP(+) + H2O. Its pathway is siderophore biosynthesis; pyoverdin biosynthesis. Functionally, catalyzes the conversion of L-ornithine to N(5)-hydroxyornithine, the first step in the biosynthesis of all hydroxamate-containing siderophores, such as pyoverdin. Pyoverdin is a hydroxamate siderophore composed of a 6,7-dihydroxyquinoline-containing fluorescent chromophore joined to the N-terminus of a partly cyclic octapeptide (D-Ser-L-Arg-D-Ser-L-N(5)-OH-Orn-L-Lys-L-N(5)-OH-Orn-L-Thr-L-Thr in strain PAO1). Specific for NADPH, which plays a role in stabilization of the C4a-hydroperoxyflavin intermediate. This Pseudomonas aeruginosa (strain ATCC 15692 / DSM 22644 / CIP 104116 / JCM 14847 / LMG 12228 / 1C / PRS 101 / PAO1) protein is L-ornithine N(5)-monooxygenase.